A 236-amino-acid chain; its full sequence is MTRRYWNINLKEMVEAGVHFGHGIKKWNPKMAPYISAKRKGTHIINLARTARFLSEACDLVFDAASQGKSFLIVGTKKRATDLVASAAIRARCHYVNKKWFSGMLTNWSITKTRLSQFRDLRAEEKMGKFQHLPKRDVAILKRKLSTLQRYLGGIKYMTRLPDIVIVLDQQKEYIALRECAILGIPTISLVDTNCDPDLANISIPANDDTMTSIRLILNKLVFAICEGHSLYIRNH.

Belongs to the universal ribosomal protein uS2 family.

Its subcellular location is the plastid. The protein localises to the chloroplast. This chain is Small ribosomal subunit protein uS2c (rps2), found in Lolium perenne (Perennial ryegrass).